Here is a 153-residue protein sequence, read N- to C-terminus: Transcriptional repressor NrdR (153 aa).

A zinc finger lies at 3 to 34 (CPSCHHSGTRVLESRPVEEGRSIRRRRECEQC). The 91-residue stretch at 49–139 (LIVVKKEGTR…VYRQFKDINV (91 aa)) folds into the ATP-cone domain.

Belongs to the NrdR family. The cofactor is Zn(2+).

Functionally, negatively regulates transcription of bacterial ribonucleotide reductase nrd genes and operons by binding to NrdR-boxes. The polypeptide is Transcriptional repressor NrdR (Geobacillus kaustophilus (strain HTA426)).